The sequence spans 199 residues: TEGGAVHTMCQYTSPQPSPNCGTYSNAHITAADKETILKVHNDERQKVKAGQETRGNPGPQPAASNMPDLTWDNELAAIAQRWVNQCKIGHDGCRNVERYQVGQNIAMSGSTAKGPCNMNNLVQMWINEVNALNAADVSSMPSDGNYFMKIGHYTQLVWGKTTKVGCGIIQFLDGKFYKCYLACNYGPAGNMFGAPIYQ.

Intrachain disulfides connect Cys21-Cys87 and Cys167-Cys184. One can recognise an SCP domain in the interval 38–186 (LKVHNDERQK…FYKCYLACNY (149 aa)). A disordered region spans residues 47–67 (KVKAGQETRGNPGPQPAASNM).

It belongs to the CRISP family. Venom allergen 5-like subfamily. As to expression, expressed by the venom gland.

The protein localises to the secreted. The chain is Venom allergen 5 from Brachyponera chinensis (Asian needle ant).